The chain runs to 290 residues: Ribosomal RNA small subunit methyltransferase A (290 aa).

N27, L29, G54, E75, D100, and N125 together coordinate S-adenosyl-L-methionine.

Belongs to the class I-like SAM-binding methyltransferase superfamily. rRNA adenine N(6)-methyltransferase family. RsmA subfamily.

The protein localises to the cytoplasm. The catalysed reaction is adenosine(1518)/adenosine(1519) in 16S rRNA + 4 S-adenosyl-L-methionine = N(6)-dimethyladenosine(1518)/N(6)-dimethyladenosine(1519) in 16S rRNA + 4 S-adenosyl-L-homocysteine + 4 H(+). Specifically dimethylates two adjacent adenosines (A1518 and A1519) in the loop of a conserved hairpin near the 3'-end of 16S rRNA in the 30S particle. May play a critical role in biogenesis of 30S subunits. This chain is Ribosomal RNA small subunit methyltransferase A, found in Streptococcus uberis (strain ATCC BAA-854 / 0140J).